A 726-amino-acid chain; its full sequence is Cyclin-T1 (726 aa).

Ser-117 is modified (phosphoserine). The short motif at 253–270 (KRIWNWRACEAAKKTKAD) is the Nuclear localization signal, and interaction with Tat-TAR RNA element. Ser-340 bears the Phosphoserine mark. Lys-342 is covalently cross-linked (Glycyl lysine isopeptide (Lys-Gly) (interchain with G-Cter in SUMO2)). The interval 360–385 (VDHSLPQDGSNAFISQKQNSKSVPSA) is disordered. Residues 366–382 (QDGSNAFISQKQNSKSV) show a composition bias toward polar residues. Residues 384–425 (SAKVSLKEYRAKHAEELAAQKRQLENMEANVKSQYAYAAQNL) are a coiled coil. Position 388 is a phosphoserine (Ser-388). N6-acetyllysine is present on Lys-390. Residue Lys-415 forms a Glycyl lysine isopeptide (Lys-Gly) (interchain with G-Cter in SUMO2) linkage. ADP-ribosylserine is present on residues Ser-416, Ser-474, and Ser-475. The interval 480-550 (IKMRIKVHAA…RPGDPKHSSQ (71 aa)) is histidine-rich domain (HRD). Residue Lys-481 forms a Glycyl lysine isopeptide (Lys-Gly) (interchain with G-Cter in SUMO2) linkage. Lys-485 is modified (N6-(ADP-ribosyl)lysine). An ADP-ribosylhistidine modification is found at His-487. Residues 487–506 (HAAADKHNSVEDSVTKSREH) are compositionally biased toward basic and acidic residues. Disordered stretches follow at residues 487–650 (HAAA…NGHN) and 688–726 (SDYL…PLPK). 2 positions are modified to phosphoserine: Ser-495 and Ser-499. The span at 507-530 (KEKHKTHPSNHHHHHNHHSHKHSH) shows a compositional bias: basic residues. Residues 527-570 (KHSHSQLPVGTGNKRPGDPKHSSQTSNLAHKTYSLSSSFSSSSS) are required for interaction with ZMYND8. Residue His-530 is modified to ADP-ribosylhistidine. 3 positions are modified to ADP-ribosylserine: Ser-531, Ser-549, and Ser-552. Residue His-556 is modified to ADP-ribosylhistidine. The segment covering 560–570 (SLSSSFSSSSS) has biased composition (low complexity). At Ser-563 the chain carries ADP-ribosylserine. Phosphoserine is present on residues Ser-564 and Ser-577. The span at 594–609 (STKSSSLNFSFPSLPT) shows a compositional bias: low complexity. Over residues 615–630 (GHSSDTSGLSFSQPSC) the composition is skewed to polar residues. ADP-ribosylserine is present on Ser-637. The span at 710-726 (PPPLPSEPPPPLPPLPK) shows a compositional bias: pro residues.

This sequence belongs to the cyclin family. Cyclin C subfamily. As to quaternary structure, cyclin-T1 is the predominant cyclin that associates with CDK9 to form a heterodimer called P-TEFb. P-TEFb forms a complex with AFF4/AF5Q31. Component of a complex which is at least composed of HTATSF1/Tat-SF1, P-TEFb complex, RNA pol II, SUPT5H, and NCL/nucleolin. Component of the 7SK snRNP complex at least composed of P-TEFb (composed of CDK9 and CCNT1/cyclin-T1), HEXIM1, HEXIM2, BCDIN3, SART3 proteins and 7SK and U6 snRNAs. Interacts (via central region) with ZMYND8 (via N-terminus); the interaction is direct and the association appears to occur between homodimeric ZMYND8 and the activated form of the P-TEFb complex. Interacts with BRD4, targets chromatin binding. Interacts with JMJD6. Interacts with MDFIC. Interacts with HSF1. Interacts with HTATSF1. Interacts with TBX21. (Microbial infection) Interacts with the transactivation region of HIV-1, HIV-2 and SIV Tat. In terms of assembly, (Microbial infection) Interacts with human herpes virus 1 (HHV-1) transcriptional regulator ICP22. In terms of processing, ADP-ribosylation on serine residues by PARP1 in response to DNA damage disrupts the phase separation activity of CCNT1, thereby preventing activation of CDK9. Ubiquitously expressed.

Its subcellular location is the nucleus. Regulatory subunit of the cyclin-dependent kinase pair (CDK9/cyclin-T1) complex, also called positive transcription elongation factor B (P-TEFb), which facilitates the transition from abortive to productive elongation by phosphorylating the CTD (C-terminal domain) of the large subunit of RNA polymerase II (RNA Pol II). Required to activate the protein kinase activity of CDK9: acts by mediating formation of liquid-liquid phase separation (LLPS) that enhances binding of P-TEFb to the CTD of RNA Pol II. Functionally, (Microbial infection) In case of HIV or SIV infections, binds to the transactivation domain of the viral nuclear transcriptional activator, Tat, thereby increasing Tat's affinity for the transactivating response RNA element (TAR RNA). Serves as an essential cofactor for Tat, by promoting RNA Pol II activation, allowing transcription of viral genes. In Homo sapiens (Human), this protein is Cyclin-T1 (CCNT1).